Here is a 384-residue protein sequence, read N- to C-terminus: UDP-N-acetylglucosamine--N-acetylmuramyl-(pentapeptide) pyrophosphoryl-undecaprenol N-acetylglucosamine transferase (384 aa).

UDP-N-acetyl-alpha-D-glucosamine is bound by residues 17–19 (TGG), Asn131, Arg172, Ser200, and Gln301.

The protein belongs to the glycosyltransferase 28 family. MurG subfamily.

The protein localises to the cell inner membrane. It catalyses the reaction di-trans,octa-cis-undecaprenyl diphospho-N-acetyl-alpha-D-muramoyl-L-alanyl-D-glutamyl-meso-2,6-diaminopimeloyl-D-alanyl-D-alanine + UDP-N-acetyl-alpha-D-glucosamine = di-trans,octa-cis-undecaprenyl diphospho-[N-acetyl-alpha-D-glucosaminyl-(1-&gt;4)]-N-acetyl-alpha-D-muramoyl-L-alanyl-D-glutamyl-meso-2,6-diaminopimeloyl-D-alanyl-D-alanine + UDP + H(+). The protein operates within cell wall biogenesis; peptidoglycan biosynthesis. Functionally, cell wall formation. Catalyzes the transfer of a GlcNAc subunit on undecaprenyl-pyrophosphoryl-MurNAc-pentapeptide (lipid intermediate I) to form undecaprenyl-pyrophosphoryl-MurNAc-(pentapeptide)GlcNAc (lipid intermediate II). This chain is UDP-N-acetylglucosamine--N-acetylmuramyl-(pentapeptide) pyrophosphoryl-undecaprenol N-acetylglucosamine transferase, found in Granulibacter bethesdensis (strain ATCC BAA-1260 / CGDNIH1).